Here is a 544-residue protein sequence, read N- to C-terminus: CTP synthase (544 aa).

The segment at 1–266 (MIRYIFITGG…DSEVLSHFGI (266 aa)) is amidoligase domain. Residue S13 participates in CTP binding. S13 is a UTP binding site. ATP-binding positions include 14-19 (SLGKGI) and D71. Residues D71 and E140 each contribute to the Mg(2+) site. Residues 147-149 (DIE), 187-192 (KTKPTQ), and K223 each bind CTP. UTP is bound by residues 187–192 (KTKPTQ) and K223. ATP is bound at residue 239–241 (RDV). One can recognise a Glutamine amidotransferase type-1 domain in the interval 292–543 (TIGLVGKYTD…IAAAVKQSRL (252 aa)). G355 contributes to the L-glutamine binding site. The active-site Nucleophile; for glutamine hydrolysis is the C382. Residues 383–386 (YGMQ), E406, and R471 contribute to the L-glutamine site. Active-site residues include H516 and E518.

This sequence belongs to the CTP synthase family. In terms of assembly, homotetramer.

It catalyses the reaction UTP + L-glutamine + ATP + H2O = CTP + L-glutamate + ADP + phosphate + 2 H(+). It carries out the reaction L-glutamine + H2O = L-glutamate + NH4(+). The enzyme catalyses UTP + NH4(+) + ATP = CTP + ADP + phosphate + 2 H(+). Its pathway is pyrimidine metabolism; CTP biosynthesis via de novo pathway; CTP from UDP: step 2/2. Its activity is regulated as follows. Allosterically activated by GTP, when glutamine is the substrate; GTP has no effect on the reaction when ammonia is the substrate. The allosteric effector GTP functions by stabilizing the protein conformation that binds the tetrahedral intermediate(s) formed during glutamine hydrolysis. Inhibited by the product CTP, via allosteric rather than competitive inhibition. Catalyzes the ATP-dependent amination of UTP to CTP with either L-glutamine or ammonia as the source of nitrogen. Regulates intracellular CTP levels through interactions with the four ribonucleotide triphosphates. The chain is CTP synthase from Hyphomonas neptunium (strain ATCC 15444).